Here is a 446-residue protein sequence, read N- to C-terminus: Asparagine--tRNA ligase (446 aa).

This sequence belongs to the class-II aminoacyl-tRNA synthetase family. Homodimer.

The protein resides in the cytoplasm. It catalyses the reaction tRNA(Asn) + L-asparagine + ATP = L-asparaginyl-tRNA(Asn) + AMP + diphosphate + H(+). This chain is Asparagine--tRNA ligase, found in Sorangium cellulosum (strain So ce56) (Polyangium cellulosum (strain So ce56)).